The sequence spans 250 residues: Flavin-dependent thymidylate synthase (250 aa).

A ThyX domain is found at 7-233; that stretch reads LRVQLIAKTE…PQVFSDFEIV (227 aa). FAD is bound by residues serine 71, 95–97, and glutamine 103; that span reads RHR. Residues 92–95, 103–107, and arginine 172 each bind dUMP; these read ELIR and QLSQR. Positions 95–105 match the ThyX motif motif; sequence RHRHFSYSQLS. FAD-binding positions include 188–190 and histidine 194; that span reads NYR. A dUMP-binding site is contributed by arginine 199. Arginine 199 acts as the Involved in ionization of N3 of dUMP, leading to its activation in catalysis.

Belongs to the thymidylate synthase ThyX family. Homotetramer. Requires FAD as cofactor.

The enzyme catalyses dUMP + (6R)-5,10-methylene-5,6,7,8-tetrahydrofolate + NADPH + H(+) = dTMP + (6S)-5,6,7,8-tetrahydrofolate + NADP(+). It participates in pyrimidine metabolism; dTTP biosynthesis. Functionally, catalyzes the reductive methylation of 2'-deoxyuridine-5'-monophosphate (dUMP) to 2'-deoxythymidine-5'-monophosphate (dTMP) while utilizing 5,10-methylenetetrahydrofolate (mTHF) as the methyl donor, and NADPH and FADH(2) as the reductant. This is Flavin-dependent thymidylate synthase from Mycolicibacterium vanbaalenii (strain DSM 7251 / JCM 13017 / BCRC 16820 / KCTC 9966 / NRRL B-24157 / PYR-1) (Mycobacterium vanbaalenii).